Here is a 36-residue protein sequence, read N- to C-terminus: Pancreatic polypeptide (36 aa).

Tyrosine 36 carries the post-translational modification Tyrosine amide.

Belongs to the NPY family.

The protein resides in the secreted. Its function is as follows. Hormone secreted by pancreatic cells that acts as a regulator of pancreatic and gastrointestinal functions probably by signaling through the G protein-coupled receptor NPY4R2. This is Pancreatic polypeptide (PPY) from Erinaceus europaeus (Western European hedgehog).